Reading from the N-terminus, the 552-residue chain is Urocanate hydratase (552 aa).

Residues 49-50 (GG), glutamine 127, 173-175 (GMG), aspartate 193, 239-240 (NA), 260-264 (QTSAH), 270-271 (YI), and tyrosine 319 contribute to the NAD(+) site. Residue cysteine 407 is part of the active site. Position 489 (glycine 489) interacts with NAD(+).

This sequence belongs to the urocanase family. NAD(+) serves as cofactor.

It localises to the cytoplasm. It catalyses the reaction 4-imidazolone-5-propanoate = trans-urocanate + H2O. Its pathway is amino-acid degradation; L-histidine degradation into L-glutamate; N-formimidoyl-L-glutamate from L-histidine: step 2/3. Its function is as follows. Catalyzes the conversion of urocanate to 4-imidazolone-5-propionate. The chain is Urocanate hydratase from Bacillus mycoides (strain KBAB4) (Bacillus weihenstephanensis).